A 194-amino-acid chain; its full sequence is Peptidyl-tRNA hydrolase (194 aa).

His-17 is a tRNA binding site. Residue His-22 is the Proton acceptor of the active site. Residues Phe-68, Asn-70, and Asn-116 each contribute to the tRNA site.

The protein belongs to the PTH family. In terms of assembly, monomer.

The protein resides in the cytoplasm. It carries out the reaction an N-acyl-L-alpha-aminoacyl-tRNA + H2O = an N-acyl-L-amino acid + a tRNA + H(+). In terms of biological role, hydrolyzes ribosome-free peptidyl-tRNAs (with 1 or more amino acids incorporated), which drop off the ribosome during protein synthesis, or as a result of ribosome stalling. Catalyzes the release of premature peptidyl moieties from peptidyl-tRNA molecules trapped in stalled 50S ribosomal subunits, and thus maintains levels of free tRNAs and 50S ribosomes. In Xanthomonas oryzae pv. oryzae (strain MAFF 311018), this protein is Peptidyl-tRNA hydrolase.